Here is a 491-residue protein sequence, read N- to C-terminus: Chondroitin proteoglycan 2 (491 aa).

Residues 1 to 18 form the signal peptide; it reads MKTIVALGLLALATAASG. One can recognise a Chitin-binding type-2 1 domain in the interval 21–78; that stretch reads LQDCTNALDGLYAIGNCESQFLTCSGGIARIMDCPADLIYNEPLLICDWRHNVVGCEG. A disulfide bridge connects residues cysteine 54 and cysteine 67. The interval 80-126 is disordered; it reads GEASGEQSGEGSGEASGEGSGEASGEGSGEASGEGSGSGEGSGEENN. Positions 87–120 are enriched in gly residues; that stretch reads SGEGSGEASGEGSGEASGEGSGEASGEGSGSGEG. The 58-residue stretch at 125 to 182 folds into the Chitin-binding type-2 2 domain; sequence NNVCEGLEDGAYSSGGCTTYYFFCTDNTARFLSCPTPLFYDVATQKCAWKALVEECNG. The cysteines at positions 158 and 171 are disulfide-linked. Positions 187–217 are disordered; it reads DGSGETSGEGSGEASGENSGENSGEGSGEFE. 2 O-linked (Xyl...) (chondroitin sulfate) serine glycosylation sites follow: serine 197 and serine 201. Over residues 200-210 the composition is skewed to low complexity; sequence ASGENSGENSG. 4 Chitin-binding type-2 domains span residues 217-274, 279-334, 367-423, and 436-491; these read EPTC…ECHG, APVC…ECQE, ENEC…KCLI, and PFDC…LQCH. 2 disulfide bridges follow: cysteine 250–cysteine 263 and cysteine 310–cysteine 323. The disordered stretch occupies residues 336–367; sequence SGEESSGEASGEQSGEGSGEASGEASGEASGE. Residues 356 to 367 are compositionally biased toward low complexity; the sequence is ASGEASGEASGE. Cysteine 399 and cysteine 412 form a disulfide bridge. An N-linked (GlcNAc...) asparagine glycan is attached at asparagine 464. A disulfide bond links cysteine 467 and cysteine 481.

Functionally, required for polar body extrusion during cytokinesis in embryo development. Affects cortical granule size. Shown to have roles in meiotic chromosome segregation, osmotic barrier function and polarization in conjunction with cpg-2. Binds chitin. This Caenorhabditis briggsae protein is Chondroitin proteoglycan 2.